A 306-amino-acid chain; its full sequence is Cell division protein ZipA (306 aa).

Residues 1–6 (MENLQL) lie on the Periplasmic side of the membrane. The helical transmembrane segment at 7 to 27 (VLLLIGAIAIIAVLVHGFWSI) threads the bilayer. Over 28 to 306 (RKQQPKGYKQ…NYIQRIRAQA (279 aa)) the chain is Cytoplasmic.

It belongs to the ZipA family. As to quaternary structure, interacts with FtsZ via their C-terminal domains.

The protein localises to the cell inner membrane. Functionally, essential cell division protein that stabilizes the FtsZ protofilaments by cross-linking them and that serves as a cytoplasmic membrane anchor for the Z ring. Also required for the recruitment to the septal ring of downstream cell division proteins. The protein is Cell division protein ZipA of Shewanella halifaxensis (strain HAW-EB4).